Consider the following 49-residue polypeptide: Large ribosomal subunit protein bL33A (49 aa).

The protein belongs to the bacterial ribosomal protein bL33 family.

In Leuconostoc mesenteroides subsp. mesenteroides (strain ATCC 8293 / DSM 20343 / BCRC 11652 / CCM 1803 / JCM 6124 / NCDO 523 / NBRC 100496 / NCIMB 8023 / NCTC 12954 / NRRL B-1118 / 37Y), this protein is Large ribosomal subunit protein bL33A.